The sequence spans 326 residues: tRNA-modifying protein YgfZ (326 aa).

Folate is bound by residues tryptophan 27 and tryptophan 189.

Belongs to the tRNA-modifying YgfZ family.

It is found in the cytoplasm. Functionally, folate-binding protein involved in regulating the level of ATP-DnaA and in the modification of some tRNAs. It is probably a key factor in regulatory networks that act via tRNA modification, such as initiation of chromosomal replication. In Shigella sonnei (strain Ss046), this protein is tRNA-modifying protein YgfZ.